The chain runs to 537 residues: Nedd4 binding protein 3 (537 aa).

S172 carries the post-translational modification Phosphoserine. Disordered regions lie at residues 173–234 (LDEG…VLSC), 327–359 (RKEL…EEEA), and 422–456 (LQEQ…EARE). Residues 178 to 207 (PEPSLSDSSSGGSFGRSPGTGPSPFSSSLG) are compositionally biased toward low complexity. Residues 295–523 (VDRLHEVAQK…LEQELRVLRE (229 aa)) adopt a coiled-coil conformation.

The protein belongs to the N4BP3 family. In terms of assembly, binds NEDD4. Interacts with 14-3-3 proteins. Interacts with MAVS.

The protein resides in the cytoplasmic vesicle. The protein localises to the cell projection. It localises to the axon. It is found in the dendrite. Plays a positive role in the antiviral innate immune signaling pathway. Mechanistically, interacts with MAVS and functions as a positive regulator to promote 'Lys-63'-linked polyubiquitination of MAVS and thus strengthens the interaction between MAVS and TRAF2. Also plays a role in axon and dendrite arborization during cranial nerve development. May also be important for neural crest migration and early development of other anterior structures including eye, brain and cranial cartilage. The sequence is that of Nedd4 binding protein 3 from Rattus norvegicus (Rat).